A 756-amino-acid polypeptide reads, in one-letter code: Glutathione biosynthesis bifunctional protein GshAB (756 aa).

Positions 1–338 are glutamate--cysteine ligase; the sequence is MNYRELMQKK…TGDIFNEQVA (338 aa). Residues 493 to 751 enclose the ATP-grasp domain; the sequence is KKILSAAGFH…LTMDVLKLLY (259 aa). Position 520–578 (520–578) interacts with ATP; the sequence is LRYANKAFVVKPKSTNYGLGITIFKEGASLEDFTEALRIAFKEDTAVLIEEFLPGTEYR. Residues Asp-700, Glu-721, and Asn-723 each contribute to the Mg(2+) site. Residues Asp-700, Glu-721, and Asn-723 each coordinate Mn(2+).

It in the N-terminal section; belongs to the glutamate--cysteine ligase type 1 family. Type 2 subfamily. As to quaternary structure, monomer. Requires Mg(2+) as cofactor. Mn(2+) is required as a cofactor.

It catalyses the reaction L-cysteine + L-glutamate + ATP = gamma-L-glutamyl-L-cysteine + ADP + phosphate + H(+). It carries out the reaction gamma-L-glutamyl-L-cysteine + glycine + ATP = glutathione + ADP + phosphate + H(+). The protein operates within sulfur metabolism; glutathione biosynthesis; glutathione from L-cysteine and L-glutamate: step 1/2. It participates in sulfur metabolism; glutathione biosynthesis; glutathione from L-cysteine and L-glutamate: step 2/2. Synthesizes glutathione from L-glutamate and L-cysteine via gamma-L-glutamyl-L-cysteine. In Enterococcus faecalis (strain ATCC 700802 / V583), this protein is Glutathione biosynthesis bifunctional protein GshAB.